A 929-amino-acid polypeptide reads, in one-letter code: Type I restriction enzyme SauCOLORF180P endonuclease subunit (929 aa).

In terms of domain architecture, Helicase ATP-binding spans 254 to 418 (QQATETGNNG…DGRTTADIFG (165 aa)). 268 to 274 (TTGSGKT) is an ATP binding site.

Belongs to the HsdR family. In terms of assembly, the type I restriction/modification system is composed of three polypeptides R, M and S.

It catalyses the reaction Endonucleolytic cleavage of DNA to give random double-stranded fragments with terminal 5'-phosphates, ATP is simultaneously hydrolyzed.. The restriction (R) subunit of a type I restriction enzyme that recognizes an undetermined sequence and cleaves a random distance away. Subunit R is required for both nuclease and ATPase activities, but not for modification. After locating a non-methylated recognition site, the enzyme complex serves as a molecular motor that translocates DNA in an ATP-dependent manner until a collision occurs that triggers cleavage. The protein is Type I restriction enzyme SauCOLORF180P endonuclease subunit of Staphylococcus aureus (strain COL).